A 336-amino-acid chain; its full sequence is MTPNDAKRPLQLNDQGRLRHFLSLDGLSRELLTEILDTADSFLEVGTRAVKKVPLLRGRTVCNVFFENSTRTRTTFEMAAQRLSADVITLNVSTSSTSKGETLFDTLRNLEAMAADMFVIRHADSGAAHFIAEHVCPDVAVINGGDGRHAHPTQGMLDMLTIRRHKGGFENLSVAIVGDILHSRVARSDMLALRALGCPDIRVIGPKTLLPMGLEQYGVRVFHDLDEGLRDVDVVIMLRLQRERMQGGLLPSQGEFYRLYGLSTARLARARPDAIVMHPGPINRGVEIESAVADGAQSVILNQVTYGIAVRMAVLSMAMSGQTAQRQLNSESEEQI.

2 residues coordinate carbamoyl phosphate: Arg71 and Thr72. An L-aspartate-binding site is contributed by Lys99. 3 residues coordinate carbamoyl phosphate: Arg121, His151, and Gln154. 2 residues coordinate L-aspartate: Arg184 and Arg239. 2 residues coordinate carbamoyl phosphate: Gly280 and Pro281.

The protein belongs to the aspartate/ornithine carbamoyltransferase superfamily. ATCase family. As to quaternary structure, heterododecamer (2C3:3R2) of six catalytic PyrB chains organized as two trimers (C3), and six regulatory PyrI chains organized as three dimers (R2).

The enzyme catalyses carbamoyl phosphate + L-aspartate = N-carbamoyl-L-aspartate + phosphate + H(+). It participates in pyrimidine metabolism; UMP biosynthesis via de novo pathway; (S)-dihydroorotate from bicarbonate: step 2/3. Functionally, catalyzes the condensation of carbamoyl phosphate and aspartate to form carbamoyl aspartate and inorganic phosphate, the committed step in the de novo pyrimidine nucleotide biosynthesis pathway. The protein is Aspartate carbamoyltransferase catalytic subunit of Azotobacter vinelandii (strain DJ / ATCC BAA-1303).